A 667-amino-acid chain; its full sequence is Leucine zipper putative tumor suppressor 2 (667 aa).

A compositionally biased stretch (low complexity) spans 1–25 (MAIVQTLPVPLEPAPEAATAQQAPA). 3 disordered regions span residues 1–132 (MAIV…PVSG), 150–325 (PVLP…DEAL), and 516–541 (QEAERLREKAGQLDSEAAGLREPPVP). The tract at residues 1–333 (MAIVQTLPVP…ALLHCVLEGK (333 aa)) is required for centrosomal localization. A compositionally biased stretch (polar residues) spans 172–181 (PSGSQGSLTQ). A compositionally biased stretch (low complexity) spans 187 to 198 (ASSSSSSSSSAA). The segment covering 212-232 (PSGTLSDSGRNSLSSLPTYST) has biased composition (polar residues). The span at 241-282 (SPGGHLPSHGPGRGALPGPARGAPTGPSHSDSGRSSSSKSTG) shows a compositional bias: low complexity. Ser-248 is modified (phosphoserine). The segment covering 283–294 (SLGGRLAGGLLG) has biased composition (gly residues). Residue Ser-295 is modified to Phosphoserine. Residues 310-321 (SPPPPPPPPPPS) show a composition bias toward pro residues. Residues 329-647 (VLEGKLRDRE…LELEARELAD (319 aa)) are a coiled coil. The tract at residues 445–667 (SGEISLLKQQ…CLEEITATEI (223 aa)) is sufficient for interaction with CTNNB1. The interval 448-667 (ISLLKQQLKE…CLEEITATEI (220 aa)) is sufficient for interaction with KATNB1 and for inhibition of katanin-mediated microtubule severing. A compositionally biased stretch (basic and acidic residues) spans 516 to 526 (QEAERLREKAG). At Ser-568 the chain carries Phosphoserine. The short motif at 629 to 638 (LEQELQQLSL) is the Nuclear export signal element.

This sequence belongs to the LZTS2 family. As to quaternary structure, interacts with KATNB1. Also interacts with CTNNB1, gamma-tubulin and KIF23.

It localises to the cytoplasm. The protein resides in the cytoskeleton. The protein localises to the microtubule organizing center. Its subcellular location is the centrosome. Negative regulator of katanin-mediated microtubule severing and release from the centrosome. Required for central spindle formation and the completion of cytokinesis. May negatively regulate axonal outgrowth by preventing the formation of microtubule bundles that are necessary for transport within the elongating axon. Negative regulator of the Wnt signaling pathway. Represses beta-catenin-mediated transcriptional activation by promoting the nuclear exclusion of beta-catenin. This Bos taurus (Bovine) protein is Leucine zipper putative tumor suppressor 2.